The sequence spans 452 residues: UDP-N-acetylmuramoylalanine--D-glutamate ligase (452 aa).

ATP is bound at residue 119 to 125 (GSNGKTT).

It belongs to the MurCDEF family.

Its subcellular location is the cytoplasm. The enzyme catalyses UDP-N-acetyl-alpha-D-muramoyl-L-alanine + D-glutamate + ATP = UDP-N-acetyl-alpha-D-muramoyl-L-alanyl-D-glutamate + ADP + phosphate + H(+). The protein operates within cell wall biogenesis; peptidoglycan biosynthesis. Its function is as follows. Cell wall formation. Catalyzes the addition of glutamate to the nucleotide precursor UDP-N-acetylmuramoyl-L-alanine (UMA). This chain is UDP-N-acetylmuramoylalanine--D-glutamate ligase, found in Streptococcus equi subsp. zooepidemicus (strain MGCS10565).